Consider the following 289-residue polypeptide: Bifunctional protein FolD (289 aa).

NADP(+)-binding positions include 166-168 (GRS), S191, and I232.

The protein belongs to the tetrahydrofolate dehydrogenase/cyclohydrolase family. Homodimer.

It catalyses the reaction (6R)-5,10-methylene-5,6,7,8-tetrahydrofolate + NADP(+) = (6R)-5,10-methenyltetrahydrofolate + NADPH. The catalysed reaction is (6R)-5,10-methenyltetrahydrofolate + H2O = (6R)-10-formyltetrahydrofolate + H(+). Its pathway is one-carbon metabolism; tetrahydrofolate interconversion. In terms of biological role, catalyzes the oxidation of 5,10-methylenetetrahydrofolate to 5,10-methenyltetrahydrofolate and then the hydrolysis of 5,10-methenyltetrahydrofolate to 10-formyltetrahydrofolate. This is Bifunctional protein FolD from Synechococcus elongatus (strain ATCC 33912 / PCC 7942 / FACHB-805) (Anacystis nidulans R2).